A 501-amino-acid chain; its full sequence is uncharacterized protein (501 aa).

Residues I26 to M46 form a helical membrane-spanning segment. Disordered stretches follow at residues R316 to R384 and E409 to N501. The span at R476–P490 shows a compositional bias: low complexity.

The protein resides in the membrane. This is an uncharacterized protein from Homo sapiens (Human).